The primary structure comprises 184 residues: ATP synthase subunit b, chloroplastic (184 aa).

A helical membrane pass occupies residues 27–49; it reads LATNPINLSVVLGVLIFFGKGVL.

The protein belongs to the ATPase B chain family. As to quaternary structure, F-type ATPases have 2 components, F(1) - the catalytic core - and F(0) - the membrane proton channel. F(1) has five subunits: alpha(3), beta(3), gamma(1), delta(1), epsilon(1). F(0) has four main subunits: a(1), b(1), b'(1) and c(10-14). The alpha and beta chains form an alternating ring which encloses part of the gamma chain. F(1) is attached to F(0) by a central stalk formed by the gamma and epsilon chains, while a peripheral stalk is formed by the delta, b and b' chains.

The protein resides in the plastid. It localises to the chloroplast thylakoid membrane. Its function is as follows. F(1)F(0) ATP synthase produces ATP from ADP in the presence of a proton or sodium gradient. F-type ATPases consist of two structural domains, F(1) containing the extramembraneous catalytic core and F(0) containing the membrane proton channel, linked together by a central stalk and a peripheral stalk. During catalysis, ATP synthesis in the catalytic domain of F(1) is coupled via a rotary mechanism of the central stalk subunits to proton translocation. Functionally, component of the F(0) channel, it forms part of the peripheral stalk, linking F(1) to F(0). This Gossypium barbadense (Sea Island cotton) protein is ATP synthase subunit b, chloroplastic.